A 292-amino-acid chain; its full sequence is Putative two-component response regulator-like APRR4 (292 aa).

Residues arginine 43–valine 158 form the Response regulatory domain. Positions valine 168–arginine 215 are disordered. A compositionally biased stretch (polar residues) spans lysine 179–proline 191. Residues arginine 225–phenylalanine 275 constitute a DNA-binding region (myb-like GARP).

This sequence belongs to the ARR-like family. Binds the target DNA as a monomer.

It is found in the nucleus. Transcriptional activator that binds specifically to the DNA sequence 5'-[AG]GATT-3'. The sequence is that of Putative two-component response regulator-like APRR4 (APRR4) from Arabidopsis thaliana (Mouse-ear cress).